The sequence spans 1129 residues: Protein TPR1 (1129 aa).

The region spanning 4–36 (LSRELVFLILQFLDEEKFKETVHKLEQESGFFF) is the LisH domain. The CTLH domain maps to 34 to 92 (FFFNMKYFEEKVHAGEWDEVEKYLSGFTKVDDNRYSMKIFFEIRKQKYLEALDRHDRAK). WD repeat units lie at residues 337-377 (SQGS…RLFS), 398-437 (ESSI…ETRQ), 443-485 (AHSG…FSFE), 487-527 (HEAP…SRVD), 579-618 (KKSA…MLSS), 623-662 (GGLP…RTLR), 762-801 (DQAS…QNPS), 829-867 (NPED…VMTT), 870-910 (PPPP…VKTR), 913-952 (GHQR…KKKS), and 1005-1044 (ALSA…LRCR). The segment at 1092–1129 (LESEGKWGTTPPTENGVPNGRTSTSSATSNPAADQIQR) is disordered. A compositionally biased stretch (low complexity) spans 1113–1129 (TSTSSATSNPAADQIQR).

As to quaternary structure, tetramer. Interacts with D53. Interacts with WOX1. Interacts with MOF1. In terms of tissue distribution, expressed in panicles, stems, leaves, spikelets and seed endosperm.

Its function is as follows. Probable downstream regulator of strigolactones signaling. In Oryza sativa subsp. japonica (Rice), this protein is Protein TPR1.